We begin with the raw amino-acid sequence, 352 residues long: Long-chain-alcohol O-fatty-acyltransferase (352 aa).

8 consecutive transmembrane segments (helical) span residues 13-33 (VWIS…VAPH), 34-54 (GGAL…FLPL), 67-87 (LYLV…LGPL), 128-148 (KVVL…IYEF), 155-175 (FVIS…TLAA), 239-259 (VAGA…VFFF), 267-287 (SWEV…EMVV), and 303-323 (GALT…PQLV).

It belongs to the wax synthase family.

It localises to the microsome membrane. It catalyses the reaction a long chain fatty alcohol + a fatty acyl-CoA = a wax ester + CoA. In terms of biological role, catalyzes the final step in the synthesis of long-chain linear esters (waxes). Has activity with both saturated and monounsaturated acyl-CoA ranging from 14 to 24 carbons in length, but C20:1 acyl-CoA is the preferred substrate. This chain is Long-chain-alcohol O-fatty-acyltransferase, found in Simmondsia chinensis (Jojoba).